A 137-amino-acid polypeptide reads, in one-letter code: Putative pre-16S rRNA nuclease (137 aa).

The protein belongs to the YqgF nuclease family.

It localises to the cytoplasm. In terms of biological role, could be a nuclease involved in processing of the 5'-end of pre-16S rRNA. This is Putative pre-16S rRNA nuclease from Clostridium botulinum (strain Alaska E43 / Type E3).